The primary structure comprises 462 residues: Cysteine--tRNA ligase (462 aa).

A Zn(2+)-binding site is contributed by C30. The short motif at 32–42 (MTVYDYCHVGH) is the 'HIGH' region element. Residues C214, H239, and E243 each coordinate Zn(2+). Residues 271 to 275 (KMSKS) carry the 'KMSKS' region motif. Residue K274 participates in ATP binding.

This sequence belongs to the class-I aminoacyl-tRNA synthetase family. As to quaternary structure, monomer. Requires Zn(2+) as cofactor.

The protein resides in the cytoplasm. The catalysed reaction is tRNA(Cys) + L-cysteine + ATP = L-cysteinyl-tRNA(Cys) + AMP + diphosphate. In Cupriavidus pinatubonensis (strain JMP 134 / LMG 1197) (Cupriavidus necator (strain JMP 134)), this protein is Cysteine--tRNA ligase.